We begin with the raw amino-acid sequence, 375 residues long: AA9 family lytic polysaccharide monooxygenase CEL1 (375 aa).

The first 16 residues, 1–16 (MLFPALALLCPVLVAA), serve as a signal peptide directing secretion. A Cu(2+)-binding site is contributed by H119. Residues C130 and C135 are joined by a disulfide bond. Residue N132 is glycosylated (N-linked (GlcNAc...) asparagine). Residue H196 participates in O2 binding. Residue N197 is glycosylated (N-linked (GlcNAc...) asparagine). Y212 contacts Cu(2+). C232 and C237 are oxidised to a cystine. The disordered stretch occupies residues 287 to 375 (NGMSSSPSSS…RSRVAHLDRH (89 aa)). Residues 290-341 (SSSPSSSSGVSSSSSSSVASSDTSDSTTSSGVVAVNVSAASSPSSSISANSA) are compositionally biased toward low complexity. N325 carries N-linked (GlcNAc...) asparagine glycosylation. Basic residues predominate over residues 347–369 (KTCKRKKRSKIAGQKRHIHRSRV).

Belongs to the polysaccharide monooxygenase AA9 family. The cofactor is Cu(2+).

The protein resides in the secreted. Its subcellular location is the cell wall. The catalysed reaction is [(1-&gt;4)-beta-D-glucosyl]n+m + reduced acceptor + O2 = 4-dehydro-beta-D-glucosyl-[(1-&gt;4)-beta-D-glucosyl]n-1 + [(1-&gt;4)-beta-D-glucosyl]m + acceptor + H2O.. Its function is as follows. Lytic polysaccharide monooxygenase (LPMO) that depolymerizes polysaccharides via the oxidation of scissile alpha- or beta-(1-4)-glycosidic bonds, yielding C4 oxidation products. Catalysis by LPMOs requires the reduction of the active-site copper from Cu(II) to Cu(I) by a reducing agent and H(2)O(2) or O(2) as a cosubstrate. Required for the expression of stress response phenotypes, including thermotolerance, cell wall integrity, and efficient cell cycle progression. Promotes intrinsic fungal cell wall remodeling events required for efficient adaptation to the host environment. Required for virulence in a murine inhalational model of cryptococcal infection as well as in Galleria mellonella larvae. The protein is AA9 family lytic polysaccharide monooxygenase CEL1 of Cryptococcus neoformans var. grubii serotype A (strain H99 / ATCC 208821 / CBS 10515 / FGSC 9487) (Filobasidiella neoformans var. grubii).